The chain runs to 367 residues: Alpha-2-HS-glycoprotein (367 aa).

An N-terminal signal peptide occupies residues 1-18; that stretch reads MKSLVLLLCLAQLWGCHS. Positions 27-133 constitute a Cystatin fetuin-A-type 1 domain; that stretch reads YRQPNCDDPE…KFSVVYAKCD (107 aa). Disulfide bonds link cysteine 32–cysteine 358, cysteine 89–cysteine 100, cysteine 114–cysteine 132, cysteine 146–cysteine 149, cysteine 208–cysteine 219, and cysteine 230–cysteine 247. Phosphoserine occurs at positions 134, 135, and 138. Residues 144–255 form the Cystatin fetuin-A-type 2 domain; that stretch reads KVCQDCPLLA…TCTVFQTQPV (112 aa). Residues asparagine 156 and asparagine 176 are each glycosylated (N-linked (GlcNAc...) asparagine). A disordered region spans residues 254–301; sequence PVTSQPQPEGANETVPTPVVDPDAPPSPPLGAPGLPPAGSPPDSHVLL. The N-linked (GlcNAc...) asparagine glycan is linked to asparagine 265. Residues 276 to 293 are compositionally biased toward pro residues; sequence DAPPSPPLGAPGLPPAGS. Residues 301-340 constitute a propeptide, connecting peptide; sequence LAAPPGHQLHWAHYDLRHTFMGVVSLGSPSGEASHPRKTR. Threonine 319 bears the Phosphothreonine mark. Residues serine 325, serine 328, and serine 330 each carry the phosphoserine modification. Threonine 339 carries an O-linked (GalNAc...) threonine glycan.

This sequence belongs to the fetuin family. In terms of assembly, alpha-2-HS glycoprotein derives from this precursor, when the connecting peptide is cleaved off. The two chains A and B are held together by a single disulfide bond. Post-translationally, phosphorylated by FAM20C in the extracellular medium.

The protein resides in the secreted. Functionally, promotes endocytosis, possesses opsonic properties and influences the mineral phase of bone. Shows affinity for calcium and barium ions. The sequence is that of Alpha-2-HS-glycoprotein (AHSG) from Pan troglodytes (Chimpanzee).